We begin with the raw amino-acid sequence, 292 residues long: Glycine--tRNA ligase alpha subunit (292 aa).

It belongs to the class-II aminoacyl-tRNA synthetase family. As to quaternary structure, tetramer of two alpha and two beta subunits.

It is found in the cytoplasm. The enzyme catalyses tRNA(Gly) + glycine + ATP = glycyl-tRNA(Gly) + AMP + diphosphate. This chain is Glycine--tRNA ligase alpha subunit, found in Synechococcus sp. (strain ATCC 27144 / PCC 6301 / SAUG 1402/1) (Anacystis nidulans).